A 381-amino-acid polypeptide reads, in one-letter code: 6-oxocyclohex-1-ene-1-carbonyl-CoA hydrolase (381 aa).

The protein belongs to the enoyl-CoA hydratase/isomerase family. Homohexamer.

It carries out the reaction 6-oxocyclohex-1-ene-1-carbonyl-CoA + 2 H2O = 3-hydroxy-6-carboxyhexanoyl-CoA + H(+). It functions in the pathway aromatic compound metabolism; benzoyl-CoA degradation. Its function is as follows. Involved in the central benzoyl-CoA catabolism. Catalyzes the addition of one molecule of water to the double bond and the hydrolytic cleavage of C-C bond in the alicyclic ring, 6-oxocyclohex-1-ene-1-carbonyl-CoA (6-OCH-CoA) to yield 3-hydroxypimelyl-CoA. The protein is 6-oxocyclohex-1-ene-1-carbonyl-CoA hydrolase of Geobacter metallireducens (strain ATCC 53774 / DSM 7210 / GS-15).